The following is a 462-amino-acid chain: A-type ATP synthase subunit B (462 aa).

This sequence belongs to the ATPase alpha/beta chains family. In terms of assembly, has multiple subunits with at least A(3), B(3), C, D, E, F, H, I and proteolipid K(x).

It localises to the cell membrane. Its function is as follows. Component of the A-type ATP synthase that produces ATP from ADP in the presence of a proton gradient across the membrane. The B chain is a regulatory subunit. The sequence is that of A-type ATP synthase subunit B from Methanococcus vannielii (strain ATCC 35089 / DSM 1224 / JCM 13029 / OCM 148 / SB).